The sequence spans 459 residues: Cysteine--tRNA ligase (459 aa).

Cys-28 is a Zn(2+) binding site. The short motif at 30–40 (VTVYDLCHFGH) is the 'HIGH' region element. Residues Cys-209, His-234, and Glu-238 each contribute to the Zn(2+) site. The short motif at 266-270 (KMSKS) is the 'KMSKS' region element. Lys-269 provides a ligand contact to ATP.

The protein belongs to the class-I aminoacyl-tRNA synthetase family. In terms of assembly, monomer. Requires Zn(2+) as cofactor.

Its subcellular location is the cytoplasm. The catalysed reaction is tRNA(Cys) + L-cysteine + ATP = L-cysteinyl-tRNA(Cys) + AMP + diphosphate. This Actinobacillus pleuropneumoniae serotype 5b (strain L20) protein is Cysteine--tRNA ligase.